Reading from the N-terminus, the 520-residue chain is Amine oxidase [flavin-containing] B (520 aa).

At serine 2 the chain carries N-acetylserine. Residues 2 to 489 (SSKCDVVVVG…TFLQRHLPSV (488 aa)) lie on the Cytoplasmic side of the membrane. Lysine 52 is modified (N6-acetyllysine). Residue cysteine 397 is modified to S-8alpha-FAD cysteine. Residues 490–516 (PGLLKLIGLTTIFSATALGFLAHKRGL) traverse the membrane as a helical; Anchor for type IV membrane protein segment. Over 517–520 (LVRI) the chain is Mitochondrial intermembrane.

Monomer, homo- or heterodimer (containing two subunits of similar size). Each subunit contains a covalently bound flavin. Enzymatically active as monomer. FAD serves as cofactor.

The protein localises to the mitochondrion outer membrane. It catalyses the reaction a secondary aliphatic amine + O2 + H2O = a primary amine + an aldehyde + H2O2. It carries out the reaction a primary methyl amine + O2 + H2O = an aldehyde + H2O2 + NH4(+). The enzyme catalyses benzylamine + O2 + H2O = benzaldehyde + H2O2 + NH4(+). The catalysed reaction is (R)-adrenaline + O2 + H2O = (R)-3,4-dihydroxymandelaldehyde + methylamine + H2O2. It catalyses the reaction dopamine + O2 + H2O = 3,4-dihydroxyphenylacetaldehyde + H2O2 + NH4(+). It carries out the reaction tyramine + O2 + H2O = (4-hydroxyphenyl)acetaldehyde + H2O2 + NH4(+). The enzyme catalyses (R)-noradrenaline + O2 + H2O = (R)-3,4-dihydroxymandelaldehyde + H2O2 + NH4(+). The catalysed reaction is 2-phenylethylamine + O2 + H2O = 2-phenylacetaldehyde + H2O2 + NH4(+). It catalyses the reaction N-acetylputrescine + O2 + H2O = 4-acetamidobutanal + H2O2 + NH4(+). In terms of biological role, catalyzes the oxidative deamination of primary and some secondary amines such as neurotransmitters, and exogenous amines including the tertiary amine, neurotoxin 1-methyl-4-phenyl-1,2,3,6-tetrahydropyridine (MPTP), with concomitant reduction of oxygen to hydrogen peroxide and participates in the metabolism of neuroactive and vasoactive amines in the central nervous system and peripheral tissues. Preferentially degrades benzylamine and phenylethylamine. This Bos taurus (Bovine) protein is Amine oxidase [flavin-containing] B.